We begin with the raw amino-acid sequence, 1414 residues long: DNA-directed RNA polymerase subunit beta' (1414 aa).

Positions 70, 72, 85, and 88 each coordinate Zn(2+). Mg(2+)-binding residues include Asp-460, Asp-462, and Asp-464. Zn(2+)-binding residues include Cys-814, Cys-888, Cys-895, and Cys-898. Low complexity predominate over residues 1392–1403; that stretch reads EQALSEALKSSA. The tract at residues 1392–1414 is disordered; it reads EQALSEALKSSAPQEAKAAQKDE.

Belongs to the RNA polymerase beta' chain family. In terms of assembly, the RNAP catalytic core consists of 2 alpha, 1 beta, 1 beta' and 1 omega subunit. When a sigma factor is associated with the core the holoenzyme is formed, which can initiate transcription. Mg(2+) serves as cofactor. Zn(2+) is required as a cofactor.

It catalyses the reaction RNA(n) + a ribonucleoside 5'-triphosphate = RNA(n+1) + diphosphate. In terms of biological role, DNA-dependent RNA polymerase catalyzes the transcription of DNA into RNA using the four ribonucleoside triphosphates as substrates. This chain is DNA-directed RNA polymerase subunit beta', found in Coxiella burnetii (strain RSA 331 / Henzerling II).